We begin with the raw amino-acid sequence, 518 residues long: Arrestin-related trafficking adapter 10 (518 aa).

A Glycyl lysine isopeptide (Lys-Gly) (interchain with G-Cter in ubiquitin) cross-link involves residue Lys118.

The protein belongs to the ART10 family. In terms of assembly, interacts with RSP5. In terms of processing, ubiquitinated by RSP5.

The protein resides in the cytoplasm. In terms of biological role, may regulate endocytosis by recruiting RSP5 ubiquitin ligase activity to specific plasma membrane proteins in response to extracellular stimuli. This is Arrestin-related trafficking adapter 10 (ART10) from Saccharomyces cerevisiae (strain YJM789) (Baker's yeast).